We begin with the raw amino-acid sequence, 1012 residues long: Ubiquitin-like modifier-activating enzyme 7 (1012 aa).

Residues 23–159 (GSPAMQRIQG…DTRGLVGQLF (137 aa)) form a 1-1 repeat. The segment at 23–575 (GSPAMQRIQG…GTWGSATVFM (553 aa)) is 2 approximate repeats. Position 266 is a phosphoserine (Ser-266). One copy of the 1-2 repeat lies at 423-575 (GAGFQEKLRR…GTWGSATVFM (153 aa)). 442-471 (AIGCELLKVFALVGLGAGNSGGLTVVDMDH) is an ATP binding site. Cys-599 serves as the catalytic Glycyl thioester intermediate.

This sequence belongs to the ubiquitin-activating E1 family. In terms of assembly, (Microbial infection) Interacts with human cytomegalovirus proteins NEC2/UL50 and UL26; these interactions inhibit ISGylation and cause proteasomal degradation of UBA7. As to quaternary structure, (Microbial infection) Interacts with rotavirus non-structural protein 5 (NSP5); this interaction promotes UBA7 proteasomal degradation. Monomer. Binds and is involved in the conjugation of G1P2/ISG15. In terms of processing, ISGylated. Ubiquitinated by RNF170. Expressed in a variety of normal and tumor cell types, but is reduced in lung cancer cell lines.

It is found in the cytoplasm. The protein resides in the nucleus. The protein operates within protein modification; protein ubiquitination. In terms of biological role, E1-activating enzyme that catalyzes the covalent conjugation of the ubiquitin-like protein product of ISG15 to additional interferon stimulated proteins (ISGs) as well as other cellular proteins such as P53 in a process termed protein ISGylation. Plays an essential role in antiviral immunity together with ISG15 by restricting the replication of many viruses including rabies virus, influenza virus, sindbis virus, rotavirus or human cytomegalovirus. For example, ISG15 modification of influenza A protein NS1 disrupts the association of the NS1 with importin-alpha leading to NS1 nuclear import inhibition. ISGylation of human cytomegalovirs protein UL26 regulates its stability and inhibits its activities to suppress NF-kappa-B signaling. The sequence is that of Ubiquitin-like modifier-activating enzyme 7 from Homo sapiens (Human).